The following is a 529-amino-acid chain: Amino acid transporter heavy chain SLC3A2 (529 aa).

The disordered stretch occupies residues Met-1–Glu-20. The Cytoplasmic portion of the chain corresponds to Met-1 to Ala-84. Ser-2 is modified (phosphoserine). Position 5 is a phosphothreonine (Thr-5). Basic and acidic residues predominate over residues Val-7–Glu-20. Lys-49 participates in a covalent cross-link: Glycyl lysine isopeptide (Lys-Gly) (interchain with G-Cter in ubiquitin). A Phosphoserine modification is found at Ser-65. Residue Lys-66 forms a Glycyl lysine isopeptide (Lys-Gly) (interchain with G-Cter in SUMO2) linkage. The chain crosses the membrane as a helical; Signal-anchor for type II membrane protein span at residues Leu-85–Val-105. The Extracellular segment spans residues Arg-106 to Ala-529. The N-linked (GlcNAc...) asparagine glycan is linked to Asn-266. 2 positions are modified to phosphoserine: Ser-307 and Ser-309. N-linked (GlcNAc...) asparagine glycans are attached at residues Asn-325 and Asn-405. The residue at position 426 (Ser-426) is a Phosphoserine.

This sequence belongs to the SLC3A transporter family. Disulfide-linked heterodimer with a non-glycosylated light chain (SLC7A5, SLC7A6, SLC7A7, SLC7A8, SLC7A10 or SLC7A11). Interacts with TLCD3A/CT120 and ICAM1. Constitutively and specifically associates with beta-1 integrins (alpha-2/beta-1, alpha-3/beta-1, alpha-5/beta-1 and alpha-6/beta-1), but minimally with alpha-4/beta-1. Interacts with LAPTM4B; recruits SLC3A2 and SLC7A5 to lysosomes to promote leucine uptake into these organelles and is required for mTORC1 activation. In terms of processing, phosphorylation on Ser-307 or Ser-309 and on Ser-426 by ecto-protein kinases favors heterotypic cell-cell interactions. Post-translationally, N-glycosylated; N-glycosylation is crucial for trafficking and stability of SLC3A2 to the plasma membrane.

It is found in the apical cell membrane. It localises to the cell membrane. The protein resides in the cell junction. Its subcellular location is the lysosome membrane. The protein localises to the melanosome. It is found in the basolateral cell membrane. Acts as a chaperone that facilitates biogenesis and trafficking of functional transporters heterodimers to the plasma membrane. Forms heterodimer with SLC7 family transporters (SLC7A5, SLC7A6, SLC7A7, SLC7A8, SLC7A10 and SLC7A11), a group of amino-acid antiporters. Heterodimers function as amino acids exchangers, the specificity of the substrate depending on the SLC7A subunit. Heterodimers formed by SLC3A2/SLC7A6 or SLC3A2/SLC7A7 mediate the uptake of dibasic amino acids. Heterodimer SLC3A2/SLC7A11 functions as an antiporter by mediating the exchange of extracellular anionic L-cystine and intracellular L-glutamate across the cellular plasma membrane. SLC3A2/SLC7A10 translocates small neutral L- and D-amino acids across the plasma membrane. SLC3A2/SLC75 or SLC3A2/SLC7A8 translocates neutral amino acids with broad specificity, thyroid hormones and L-DOPA. SLC3A2 is essential for plasma membrane localization, stability, and the transport activity of SLC7A5 and SLC7A8. When associated with LAPTM4B, the heterodimer SLC7A5 is recruited to lysosomes to promote leucine uptake into these organelles, and thereby mediates mTORC1 activation. Modulates integrin-related signaling and is essential for integrin-dependent cell spreading, migration and tumor progression. The sequence is that of Amino acid transporter heavy chain SLC3A2 from Oryctolagus cuniculus (Rabbit).